The following is a 147-amino-acid chain: Cyanate hydratase (147 aa).

Active-site residues include R88, E91, and S114.

Belongs to the cyanase family.

It carries out the reaction cyanate + hydrogencarbonate + 3 H(+) = NH4(+) + 2 CO2. Catalyzes the reaction of cyanate with bicarbonate to produce ammonia and carbon dioxide. The polypeptide is Cyanate hydratase (Albidiferax ferrireducens (strain ATCC BAA-621 / DSM 15236 / T118) (Rhodoferax ferrireducens)).